Reading from the N-terminus, the 49-residue chain is Large ribosomal subunit protein bL32 (49 aa).

This sequence belongs to the bacterial ribosomal protein bL32 family.

The protein is Large ribosomal subunit protein bL32 of Helicobacter hepaticus (strain ATCC 51449 / 3B1).